A 926-amino-acid polypeptide reads, in one-letter code: Nitrate reductase [NADH] (926 aa).

Positions 1 to 85 (MAASVDRQYH…SDSEEDDDEN (85 aa)) are disordered. Residues 36–46 (YTFSNPPSSNG) show a composition bias toward polar residues. The span at 58–73 (DNNSNSNNGSNNNNNR) shows a compositional bias: low complexity. Mo-molybdopterin is bound at residue C204. One can recognise a Cytochrome b5 heme-binding domain in the interval 551-626 (SKMYSMSEVK…LEDFRIGELI (76 aa)). Heme-binding residues include H586 and H609. One can recognise an FAD-binding FR-type domain in the interval 670-782 (RVKIPCKLIE…KGPLGHIEYL (113 aa)). FAD contacts are provided by residues 722–725 (RAYT), 739–743 (VVKVY), F744, F751, 756–758 (VMS), and T809.

This sequence belongs to the nitrate reductase family. In terms of assembly, homodimer. The cofactor is FAD. It depends on heme as a cofactor. Mo-molybdopterin serves as cofactor.

It catalyses the reaction nitrite + NAD(+) + H2O = nitrate + NADH + H(+). Functionally, nitrate reductase is a key enzyme involved in the first step of nitrate assimilation in plants, fungi and bacteria. The protein is Nitrate reductase [NADH] (NIA) of Spinacia oleracea (Spinach).